The primary structure comprises 401 residues: Divinyl chlorophyllide a 8-vinyl-reductase, chloroplastic (401 aa).

Residues methionine 1–leucine 10 are compositionally biased toward polar residues. Residues methionine 1–arginine 26 form a disordered region. A chloroplast-targeting transit peptide spans methionine 1–proline 54.

It localises to the plastid. Its subcellular location is the chloroplast. The enzyme catalyses protochlorophyllide a + NADP(+) = 3,8-divinyl protochlorophyllide a + NADPH + H(+). The protein operates within porphyrin-containing compound metabolism; chlorophyll biosynthesis. Its function is as follows. Catalyzes the conversion of divinyl chlorophyllide to monovinyl chlorophyllide. Reduces the 8-vinyl group of the tetrapyrrole to an ethyl group using NADPH as the reductant. Can use (3,8-divinyl)-chlorophyllide a (DV-Chlidea) &gt; (3,8-divinyl)-chlorophyll a (DV-Chla) &gt; (3,8-divinyl)-protochlorophyllide a (DV-Pchlidea) &gt; (3,8-divinyl)-magnesium-protoporphyrin IX monomethyl ester (DV-MPE) &gt; (3,8-divinyl)-magnesium-protoporphyrin IX (DV-Mg-Proto) as substrates. This is Divinyl chlorophyllide a 8-vinyl-reductase, chloroplastic (DVR) from Zea mays (Maize).